The sequence spans 1293 residues: Phosphoribosylformylglycinamidine synthase (1293 aa).

ATP contacts are provided by residues 305–316 (GAATGSGGEIRD) and Ala676. A disordered region spans residues 305 to 327 (GAATGSGGEIRDEGATGRGSKPK). Residues Asp677, Glu716, Asn720, and Asp884 each contribute to the Mg(2+) site. Position 886 (Ser886) interacts with ATP. The region spanning 1040-1293 (MAILREQGVN…MFRNARVNLG (254 aa)) is the Glutamine amidotransferase type-1 domain. Catalysis depends on Cys1133, which acts as the Nucleophile. Residues His1258 and Glu1260 contribute to the active site.

This sequence in the N-terminal section; belongs to the FGAMS family. Monomer.

It is found in the cytoplasm. It catalyses the reaction N(2)-formyl-N(1)-(5-phospho-beta-D-ribosyl)glycinamide + L-glutamine + ATP + H2O = 2-formamido-N(1)-(5-O-phospho-beta-D-ribosyl)acetamidine + L-glutamate + ADP + phosphate + H(+). It functions in the pathway purine metabolism; IMP biosynthesis via de novo pathway; 5-amino-1-(5-phospho-D-ribosyl)imidazole from N(2)-formyl-N(1)-(5-phospho-D-ribosyl)glycinamide: step 1/2. Phosphoribosylformylglycinamidine synthase involved in the purines biosynthetic pathway. Catalyzes the ATP-dependent conversion of formylglycinamide ribonucleotide (FGAR) and glutamine to yield formylglycinamidine ribonucleotide (FGAM) and glutamate. This Shewanella sp. (strain MR-4) protein is Phosphoribosylformylglycinamidine synthase.